The primary structure comprises 261 residues: MNPFEGIVMGIVQGLTEFLPVSSSAHLVLVPWLFGFETPGLVFDVALHLGTLVAVLVYFWRDWLRLVQAGSRGVGTADGRLFWFLVVATIPGVVVGYFLEDIVETTLRAPLLIGVLLIMMGGVLYLADRYGGQVKRLLDIRFGDAMAIGLSQALAIIPGVSRSGITMATARLRGVERAAAARFSFLLSTPIIFGAGLMQMLKMDPGLLNLSFVLGVFTSAVVGFLAIWFLISWVSRHSFNIFVIYRVLLGLTVIVIALLRG.

The next 8 helical transmembrane spans lie at 16–36, 40–60, 82–102, 107–127, 140–160, 183–203, 211–231, and 239–259; these read TEFL…LFGF, GLVF…VYFW, FWFL…LEDI, LRAP…LYLA, IRFG…IPGV, FSFL…MLKM, SFVL…WFLI, and FNIF…IALL.

It belongs to the UppP family.

The protein resides in the cell membrane. It catalyses the reaction di-trans,octa-cis-undecaprenyl diphosphate + H2O = di-trans,octa-cis-undecaprenyl phosphate + phosphate + H(+). In terms of biological role, catalyzes the dephosphorylation of undecaprenyl diphosphate (UPP). Confers resistance to bacitracin. The protein is Undecaprenyl-diphosphatase of Desulforudis audaxviator (strain MP104C).